Reading from the N-terminus, the 207-residue chain is Phosphatidylinositol phosphate synthase (207 aa).

2 helical membrane passes run 21–44 (LRAH…MALI) and 50–67 (WLWQ…SDSL). 28 to 31 (DVVT) is an a CDP-1,2-diacyl-sn-glycerol binding site. Mg(2+) contacts are provided by Asp-65 and Asp-68. Positions 69, 73, and 79 each coordinate a CDP-1,2-diacyl-sn-glycerol. Residues Asp-86 and Asp-90 each coordinate Mg(2+). The next 4 helical transmembrane spans lie at 88-106 (TLDR…LYFA), 112-131 (VLWT…TSYV), 152-170 (RLLV…RVGA), and 176-195 (VVAL…ITVV). The active-site Proton acceptor is the Asp-90.

It belongs to the CDP-alcohol phosphatidyltransferase class-I family. As to quaternary structure, homodimer. Requires Mg(2+) as cofactor.

The protein resides in the cell membrane. It catalyses the reaction a CDP-1,2-diacyl-sn-glycerol + 1D-myo-inositol 3-phosphate = a 1,2-diacyl-sn-glycero-3-phospho-(1D-myo-inositol-3-phosphate) + CMP + H(+). The catalysed reaction is 1,2-di-(9Z-octadecenoyl)-sn-glycero-3-cytidine-5'-diphosphate + 1D-myo-inositol 3-phosphate = 1,2-di-(9Z-octadecenoyl)-sn-glycero-3-phospho-(1D-myo-inositol-3-phosphate) + CMP + H(+). It functions in the pathway phospholipid metabolism; phosphatidylinositol phosphate biosynthesis. In terms of biological role, catalyzes the conjugation of the 1'-hydroxyl group of D-myo-inositol-3-phosphate (also named L-myo-inositol-1-phosphate) with a lipid tail of cytidine diphosphate diacylglycerol (CDP-DAG), forming phosphatidylinositol phosphate (PIP) and CMP. PIP is a precursor of phosphatidylinositol (PI) which is an essential lipid required for cell wall formation. The protein is Phosphatidylinositol phosphate synthase of Cutibacterium acnes (strain DSM 16379 / KPA171202) (Propionibacterium acnes).